A 257-amino-acid polypeptide reads, in one-letter code: Hydroxyacylglutathione hydrolase (257 aa).

Zn(2+) is bound by residues His-54, His-56, Asp-58, His-59, His-113, Asp-137, and His-175.

This sequence belongs to the metallo-beta-lactamase superfamily. Glyoxalase II family. Monomer. The cofactor is Zn(2+).

It catalyses the reaction an S-(2-hydroxyacyl)glutathione + H2O = a 2-hydroxy carboxylate + glutathione + H(+). Its pathway is secondary metabolite metabolism; methylglyoxal degradation; (R)-lactate from methylglyoxal: step 2/2. Thiolesterase that catalyzes the hydrolysis of S-D-lactoyl-glutathione to form glutathione and D-lactic acid. The chain is Hydroxyacylglutathione hydrolase from Acaryochloris marina (strain MBIC 11017).